We begin with the raw amino-acid sequence, 875 residues long: Phospholipase DDHD1 (875 aa).

Disordered regions lie at residues 1–30 (MNYP…LGSD), 101–153 (LRYY…GAAA), and 206–231 (RAQD…SVED). Residues S8 and S11 each carry the phosphoserine modification. The segment covering 130–140 (SGGGGAAGGGP) has biased composition (gly residues). A compositionally biased stretch (low complexity) spans 217–228 (GPASPAGPASSS). The active site involves S540. Positions 614–861 (LKFKVENFFC…ALFLLTFMYK (248 aa)) constitute a DDHD domain. Residue S726 is modified to Phosphoserine. A disordered region spans residues 770–804 (RSSASQPSETSRDSIEDEKKPVASPPMTTVATQTL). A compositionally biased stretch (basic and acidic residues) spans 779 to 790 (TSRDSIEDEKKP). A compositionally biased stretch (polar residues) spans 795-804 (PMTTVATQTL).

Belongs to the PA-PLA1 family. Forms homooligomers and, to a much smaller extent, heterooligomers with DDHD2. Interacts with SEC23A and SEC24C. Expressed in mature testis.

It is found in the cytoplasm. It catalyses the reaction a 1,2-diacyl-sn-glycero-3-phosphate + H2O = a 2-acyl-sn-glycerol 3-phosphate + a fatty acid + H(+). The enzyme catalyses a 1,2-diacyl-sn-glycero-3-phospho-(1D-myo-inositol) + H2O = a 2-acyl-sn-glycero-3-phospho-D-myo-inositol + a fatty acid + H(+). It carries out the reaction 1-octadecanoyl-2-(5Z,8Z,11Z,14Z-eicosatetraenoyl)-sn-glycero-3-phospho-(1D-myo-inositol) + H2O = 2-(5Z,8Z,11Z,14Z-eicosatetraenoyl)-sn-glycero-3-phospho-(1D-myo-inositol) + octadecanoate + H(+). The catalysed reaction is a 1-acyl-2-(5Z,8Z,11Z,14Z-eicosatetraenoyl)-sn-glycero-3-phospho-(1D-myo-inositol) + H2O = 2-(5Z,8Z,11Z,14Z-eicosatetraenoyl)-sn-glycero-3-phospho-(1D-myo-inositol) + a fatty acid + H(+). It catalyses the reaction 1,2-dihexadecanoyl-sn-glycero-3-phospho-(1D-myo-inositol) + H2O = 2-hexadecanoyl-sn-glycero-3-phospho-(1D-myo-inositol) + hexadecanoate + H(+). The enzyme catalyses 1,2-di-(9Z-octadecenoyl)-sn-glycero-3-phosphate + H2O = 2-(9Z-octadecenoyl)-sn-glycero-3-phosphate + (9Z)-octadecenoate + H(+). It carries out the reaction a 1-acyl-2-(5Z,8Z,11Z,14Z)-eicosatetraenoyl-sn-glycero-3-phosphate + H2O = 2-(5Z,8Z,11Z,14Z-eicosatetraenoyl)-sn-glycero-3-phosphate + a fatty acid + H(+). The catalysed reaction is 1-hexadecanoyl-2-(9Z-octadecenoyl)-sn-glycero-3-phosphate + H2O = 2-(9Z-octadecenoyl)-sn-glycero-3-phosphate + hexadecanoate + H(+). It catalyses the reaction 1-hexadecanoyl-2-(9Z-octadecenoyl)-sn-glycero-3-phospho-L-serine + H2O = 2-(9Z-octadecenoyl)-sn-glycero-3-phospho-L-serine + hexadecanoate + H(+). The enzyme catalyses 1,2-di-(5Z,8Z,11Z,14Z)-eicosatetraenoyl-sn-glycero-3-phosphate + H2O = 2-(5Z,8Z,11Z,14Z-eicosatetraenoyl)-sn-glycero-3-phosphate + (5Z,8Z,11Z,14Z)-eicosatetraenoate + H(+). It carries out the reaction 1-octadecanoyl-2-(5Z,8Z,11Z,14Z-eicosatetraenoyl)-sn-glycero-3-phosphate + H2O = 2-(5Z,8Z,11Z,14Z-eicosatetraenoyl)-sn-glycero-3-phosphate + octadecanoate + H(+). The catalysed reaction is a 1,2-diacyl-sn-glycero-3-phosphocholine + H2O = a 2-acyl-sn-glycero-3-phosphocholine + a fatty acid + H(+). It catalyses the reaction a 1,2-diacyl-sn-glycero-3-phosphoethanolamine + H2O = a 2-acyl-sn-glycero-3-phosphoethanolamine + a fatty acid + H(+). The enzyme catalyses a 1,2-diacyl-sn-glycero-3-phospho-L-serine + H2O = a 2-acyl-sn-glycero-3-phospho-L-serine + a fatty acid + H(+). It carries out the reaction a 1,2-diacyl-sn-glycero-3-phospho-(1'-sn-glycerol) + H2O = 2-acyl-sn-glycero-3-phospho-(1'-sn-glycerol) + a fatty acid + H(+). The catalysed reaction is 1-hexadecanoyl-2-(9Z-octadecenoyl)-sn-glycero-3-phospho-(1'-sn-glycerol) + H2O = 2-(9Z-octadecenoyl)-sn-glycero-3-phospho-(1'-sn-glycerol) + hexadecanoate + H(+). It catalyses the reaction 1-acyl-2-(5Z,8Z,11Z,14Z-eicosatetraenoyl)-sn-glycero-3-phosphocholine + H2O = 2-(5Z,8Z,11Z,14Z)-eicosatetraenoyl-sn-glycero-3-phosphocholine + a fatty acid + H(+). The enzyme catalyses 1-acyl-2-(5Z,8Z,11Z,14Z)-eicosatetraenoyl-sn-glycero-3-phosphoethanolamine + H2O = 2-(5Z,8Z,11Z,14Z)-eicosatetraenoyl-sn-glycero-3-phosphoethanolamine + a fatty acid + H(+). It carries out the reaction 1-(9Z-octadecenoyl)-2-(7Z,10Z,13Z,16Z,19Z-docosapentaenoyl)-sn-glycero-3-phospho-1D-myo-inositol + H2O = 2-(7Z,10Z,13Z,16Z,19Z-docosapentaenoyl)-sn-glycero-3-phospho-1D-myo-inositol + (9Z)-octadecenoate + H(+). The catalysed reaction is 1-(9Z-octadecenoyl)-2-(5Z,8Z,11Z,14Z-eicosatetraenoyl)-sn-glycero-3-phospho-1D-myo-inositol + H2O = 2-(5Z,8Z,11Z,14Z-eicosatetraenoyl)-sn-glycero-3-phospho-(1D-myo-inositol) + (9Z)-octadecenoate + H(+). It catalyses the reaction 1,2-di-(9Z-octadecenoyl)-sn-glycero-3-phospho-1D-myo-inositol + H2O = 2-(9Z-octadecenoyl)-sn-glycero-3-phospho-1D-myo-inositol + (9Z)-octadecenoate + H(+). The enzyme catalyses 1-(9Z-octadecenoyl)-2-(8Z,11Z,14Z-eicosatrienoyl)-sn-glycero-3-phospho-1D-myo-inositol + H2O = 2-(8Z,11Z,14Z-eicosatrienoyl)-sn-glycero-3-phospho-1D-myo-inositol + (9Z)-octadecenoate + H(+). It carries out the reaction 1,2-di-(9Z-octadecenoyl)-sn-glycero-3-phosphocholine + H2O = (9Z-octadecenoyl)-sn-glycero-3-phosphocholine + (9Z)-octadecenoate + H(+). Its pathway is phospholipid metabolism; phosphatidylinositol metabolism. Phospholipase A1 (PLA1) that hydrolyzes ester bonds at the sn-1 position of glycerophospholipids producing a free fatty acid and a lysophospholipid. Prefers phosphatidate (1,2-diacyl-sn-glycero-3-phosphate, PA) as substrate in vitro, but can efficiently hydrolyze phosphatidylinositol (1,2-diacyl-sn-glycero-3-phospho-(1D-myo-inositol), PI), as well as a range of other glycerophospholipid substrates such as phosphatidylcholine (1,2-diacyl-sn-glycero-3-phosphocholine, PC), phosphatidylethanolamine (1,2-diacyl-sn-glycero-3-phosphoethanolamine, PE), phosphatidylserine (1,2-diacyl-sn-glycero-3-phospho-L-serine, PS) and phosphatidylglycerol (1,2-diacyl-sn-glycero-3-phospho-(1'-sn-glycerol), PG). Involved in the regulation of the endogenous content of polyunsaturated PI and PS lipids in the nervous system. Changes in these lipids extend to downstream metabolic products like PI phosphates PIP and PIP2, which play fundamental roles in cell biology. Regulates mitochondrial morphology. These dynamic changes may be due to PA hydrolysis at the mitochondrial surface. May play a regulatory role in spermatogenesis or sperm function. The chain is Phospholipase DDHD1 (DDHD1) from Bos taurus (Bovine).